Here is a 475-residue protein sequence, read N- to C-terminus: Ribulose bisphosphate carboxylase large chain (475 aa).

Residues 1 to 2 (MS) constitute a propeptide that is removed on maturation. Pro3 bears the N-acetylproline mark. Lys14 bears the N6,N6,N6-trimethyllysine mark. Substrate-binding residues include Asn123 and Thr173. Catalysis depends on Lys175, which acts as the Proton acceptor. Lys177 serves as a coordination point for substrate. The Mg(2+) site is built by Lys201, Asp203, and Glu204. Residue Lys201 is modified to N6-carboxylysine. His294 serves as the catalytic Proton acceptor. Substrate contacts are provided by Arg295, His327, and Ser379.

This sequence belongs to the RuBisCO large chain family. Type I subfamily. In terms of assembly, heterohexadecamer of 8 large chains and 8 small chains; disulfide-linked. The disulfide link is formed within the large subunit homodimers. The cofactor is Mg(2+). Post-translationally, the disulfide bond which can form in the large chain dimeric partners within the hexadecamer appears to be associated with oxidative stress and protein turnover.

It is found in the plastid. Its subcellular location is the chloroplast. The catalysed reaction is 2 (2R)-3-phosphoglycerate + 2 H(+) = D-ribulose 1,5-bisphosphate + CO2 + H2O. It carries out the reaction D-ribulose 1,5-bisphosphate + O2 = 2-phosphoglycolate + (2R)-3-phosphoglycerate + 2 H(+). In terms of biological role, ruBisCO catalyzes two reactions: the carboxylation of D-ribulose 1,5-bisphosphate, the primary event in carbon dioxide fixation, as well as the oxidative fragmentation of the pentose substrate in the photorespiration process. Both reactions occur simultaneously and in competition at the same active site. The protein is Ribulose bisphosphate carboxylase large chain of Physcomitrium patens (Spreading-leaved earth moss).